The following is a 360-amino-acid chain: Chorismate synthase (360 aa).

Arg48 is an NADP(+) binding site. Residues 125 to 127 (RSS), 242 to 243 (NA), Gly286, 301 to 305 (KPTSS), and Arg327 contribute to the FMN site.

It belongs to the chorismate synthase family. As to quaternary structure, homotetramer. The cofactor is FMNH2.

The catalysed reaction is 5-O-(1-carboxyvinyl)-3-phosphoshikimate = chorismate + phosphate. The protein operates within metabolic intermediate biosynthesis; chorismate biosynthesis; chorismate from D-erythrose 4-phosphate and phosphoenolpyruvate: step 7/7. Catalyzes the anti-1,4-elimination of the C-3 phosphate and the C-6 proR hydrogen from 5-enolpyruvylshikimate-3-phosphate (EPSP) to yield chorismate, which is the branch point compound that serves as the starting substrate for the three terminal pathways of aromatic amino acid biosynthesis. This reaction introduces a second double bond into the aromatic ring system. The sequence is that of Chorismate synthase from Pelagibacter ubique (strain HTCC1062).